A 1278-amino-acid polypeptide reads, in one-letter code: MRLLLLVPLLLAPAPGSSAPKVRRQSDTWGPWSQWSPCSRTCGGGVSFRERPCYSQRRDGGSSCVGPARSHRSCRTESCPDGARDFRAEQCAEFDGAEFQGRRYRWLPYYSAPNKCELNCIPKGENFYYKHREAVVDGTPCEPGKRDVCVDGSCRVVGCDHELDSSKQEDKCLRCGGDGTTCYPVAGTFDANDLSRGYNQILIVPMGATSILIDEAAASRNFLAVKNVRGEYYLNGHWTIEAARALPAASTILHYERGAEGDLAPERLHARGPTSEPLVIELISQEPNPGVHYEYHLPLRRPSPGFSWSHGSWSDCSAECGGGHQSRLVFCTIDHEAYPDHMCQRQPRPADRRSCNLHPCPETKRWKAGPWAPCSASCGGGSQSRSVYCISSDGAGIQEAVEEAECAGLPGKPPAIQACNLQRCAAWSPEPWGECSVSCGVGVRKRSVTCRGERGSLLHTAACSLEDRPPLTEPCVHEDCPLLSDQAWHVGTWGLCSKSCSSGTRRRQVICAIGPPSHCGSLQHSKPVDVEPCNTQPCHLPQEVPSMQDVHTPASNPWMPLGPQESPASDSRGQWWAAQEHPSARGDHRGERGDPRGDQGTHLSALGPAPSLQQPPYQQPLRSGSGPHDCRHSPHGCCPDGHTASLGPQWQGCPGAPCQQSRYGCCPDRVSVAEGPHHAGCTKSYGGDSTGGMPRSRAVASTVHNTHQPQAQQNEPSECRGSQFGCCYDNVATAAGPLGEGCVGQPSHAYPVRCLLPSAHGSCADWAARWYFVASVGQCNRFWYGGCHGNANNFASEQECMSSCQGSLHGPRRPQPGASGRSTHTDGGGSSPAGEQEPSQHRTGAAVQRKPWPSGGLWRQDQQPGPGEAPHTQAFGEWPWGQELGSRAPGLGGDAGSPAPPFHSSSYRISLAGVEPSLVQAALGQLVRLSCSDDTAPESQAAWQKDGQPISSDRHRLQFDGSLIIHPLQAEDAGTYSCGSTRPGRDSQKIQLRIIGGDMAVLSEAELSRFPQPRDPAQDFGQAGAAGPLGAIPSSHPQPANRLRLDQNQPRVVDASPGQRIRMTCRAEGFPPPAIEWQRDGQPVSSPRHQLQPDGSLVISRVAVEDGGFYTCVAFNGQDRDQRWVQLRVLGELTISGLPPTVTVPEGDTARLLCVVAGESVNIRWSRNGLPVQADGHRVHQSPDGTLLIYNLRARDEGSYTCSAYQGSQAVSRSTEVKVVSPAPTAQPRDPGRDCVDQPELANCDLILQAQLCGNEYYSSFCCASCSRFQPHAQPIWQ.

An N-terminal signal peptide occupies residues Met-1 to Ser-18. TSP type-1 domains follow at residues Ser-26 to Pro-80, Pro-304 to Pro-361, Glu-362 to Leu-421, Arg-423 to Pro-481, and Ser-484 to His-539. Disulfide bonds link Cys-38/Cys-74, Cys-42/Cys-79, Cys-53/Cys-64, Cys-316/Cys-355, Cys-320/Cys-360, and Cys-331/Cys-343. Residues Val-544–His-632 are disordered. Over residues Pro-582–Gln-599 the composition is skewed to basic and acidic residues. The span at Pro-608–Pro-620 shows a compositional bias: low complexity. Intrachain disulfides connect Cys-754–Cys-804, Cys-763–Cys-787, and Cys-779–Cys-800. Positions Cys-754–Cys-804 constitute a BPTI/Kunitz inhibitor domain. The disordered stretch occupies residues Gln-805–Pro-901. Ig-like C2-type domains follow at residues Pro-900–Ile-995, Pro-1033–Arg-1128, and Leu-1133–Lys-1218. Cys-931 and Cys-978 are disulfide-bonded. The segment at Arg-1014–Arg-1042 is disordered. Intrachain disulfides connect Cys-1065/Cys-1112 and Cys-1154/Cys-1202. The 40-residue stretch at Pro-1231–Gln-1270 folds into the PLAC domain.

The protein belongs to the papilin family.

Its subcellular location is the secreted. This is Papilin (PAPLN) from Homo sapiens (Human).